Here is a 136-residue protein sequence, read N- to C-terminus: uncharacterized protein (136 aa).

Positions 74 to 97 (RADPGRKGRTQPLPTQGSARRFLH) are disordered.

This is an uncharacterized protein from Saccharomyces cerevisiae (strain ATCC 204508 / S288c) (Baker's yeast).